Reading from the N-terminus, the 499-residue chain is GTPase Der (499 aa).

EngA-type G domains are found at residues 3 to 166 (PVVA…LETL) and 213 to 386 (IKFA…QSAT). Residues 9-16 (GRPNVGKS), 56-60 (DTGGI), 118-121 (NKTD), 219-226 (GRPNVGKS), 266-270 (DTAGV), and 331-334 (NKWD) each bind GTP. A KH-like domain is found at 387–471 (RRTSTAMLTR…PVRVEFQESA (85 aa)).

This sequence belongs to the TRAFAC class TrmE-Era-EngA-EngB-Septin-like GTPase superfamily. EngA (Der) GTPase family. In terms of assembly, associates with the 50S ribosomal subunit.

Its function is as follows. GTPase that plays an essential role in the late steps of ribosome biogenesis. The sequence is that of GTPase Der from Aeromonas hydrophila subsp. hydrophila (strain ATCC 7966 / DSM 30187 / BCRC 13018 / CCUG 14551 / JCM 1027 / KCTC 2358 / NCIMB 9240 / NCTC 8049).